A 324-amino-acid chain; its full sequence is Deoxyhypusine hydroxylase (324 aa).

2 HEAT-like PBS-type repeats span residues leucine 60–aspartate 86 and arginine 94–arginine 119. Fe cation is bound by residues histidine 62, glutamate 63, histidine 95, and glutamate 96. A compositionally biased stretch (basic and acidic residues) spans glutamate 143 to glutamine 152. A disordered region spans residues glutamate 143–glutamine 171. 3 HEAT-like PBS-type repeats span residues lysine 189–glycine 219, phenylalanine 227–asparagine 253, and valine 260–aspartate 287. Fe cation is bound by residues histidine 229, glutamate 230, histidine 262, and glutamate 263.

It belongs to the deoxyhypusine hydroxylase family. Requires Fe(2+) as cofactor.

The protein localises to the cytoplasm. It localises to the nucleus. The enzyme catalyses [eIF5A protein]-deoxyhypusine + AH2 + O2 = [eIF5A protein]-hypusine + A + H2O. The protein operates within protein modification; eIF5A hypusination. In terms of biological role, catalyzes the hydroxylation of the N(6)-(4-aminobutyl)-L-lysine intermediate to form hypusine, an essential post-translational modification only found in mature eIF-5A factor. This chain is Deoxyhypusine hydroxylase (lia1), found in Neurospora crassa (strain ATCC 24698 / 74-OR23-1A / CBS 708.71 / DSM 1257 / FGSC 987).